Reading from the N-terminus, the 147-residue chain is Hemoglobin subunit gamma (147 aa).

One can recognise a Globin domain in the interval 3-147 (NFTAEDKAAI…VASALASRYH (145 aa)). Heme b-binding residues include H64 and H93.

Belongs to the globin family. As to quaternary structure, heterotetramer of two alpha chains and two gamma chains in fetal hemoglobin (Hb F). Red blood cells.

Functionally, gamma chains make up the fetal hemoglobin F, in combination with alpha chains. In Callithrix jacchus (White-tufted-ear marmoset), this protein is Hemoglobin subunit gamma (HBG1).